A 105-amino-acid chain; its full sequence is Large ribosomal subunit protein bL21 (105 aa).

The protein belongs to the bacterial ribosomal protein bL21 family. As to quaternary structure, part of the 50S ribosomal subunit. Contacts protein L20.

Its function is as follows. This protein binds to 23S rRNA in the presence of protein L20. This is Large ribosomal subunit protein bL21 from Desulfatibacillum aliphaticivorans.